We begin with the raw amino-acid sequence, 757 residues long: RNA-directed RNA polymerase catalytic subunit (757 aa).

Positions serine 50–tyrosine 82 are disordered. Polar residues predominate over residues tryptophan 55–proline 64. 2 short sequence motifs (nuclear localization signal) span residues arginine 187–methionine 195 and arginine 203–serine 216. The segment at arginine 249–glutamate 256 is promoter-binding site. Positions valine 286–tyrosine 483 constitute a RdRp catalytic domain.

It belongs to the influenza viruses polymerase PB1 family. Influenza RNA polymerase is composed of three subunits: PB1, PB2 and PA. Interacts (via N-terminus) with PA (via C-terminus). Interacts (via C-terminus) with PB2 (via N-terminus); this interaction is essential for transcription initiation. Post-translationally, phosphorylated by host PRKCA.

Its subcellular location is the host nucleus. The protein resides in the host cytoplasm. The catalysed reaction is RNA(n) + a ribonucleoside 5'-triphosphate = RNA(n+1) + diphosphate. In terms of biological role, RNA-dependent RNA polymerase which is responsible for replication and transcription of virus RNA segments. The transcription of viral mRNAs occurs by a unique mechanism called cap-snatching. 5' methylated caps of cellular mRNAs are cleaved after 10-13 nucleotides by PA. In turn, these short capped RNAs are used as primers by PB1 for transcription of viral mRNAs. During virus replication, PB1 initiates RNA synthesis and copy vRNA into complementary RNA (cRNA) which in turn serves as a template for the production of more vRNAs. The protein is RNA-directed RNA polymerase catalytic subunit of Aves (Human).